The sequence spans 2193 residues: MAICGIAVRLPGGISNDAQLWDFLLAKRDARSQVPGSRYNISGYHSDSGKHGTSKSKYGYFLDESVDLGTLDTSFFSFTKLELEYIDPCQRQLLEVVRECFESAGEVNYRGKDIGCFVGSFGDDWTENLTHDEQTSAKYPLMVGGDFATPNRVSYEYNLHGPSVSIRTACSSSLVALHSACLSIQNGDCSAAIVAGFNLILTPTMTMIMSSKGVLSADGSSKSFDADADGYGRGEAVNAVYIKPLHDAIRDGNPIRAVIRGTATNSDGKSAGFTVPSADAQEDVIRKAYKAAGISDLSQTAFVECHGTGTTVGDPIEVAAIANTFGGDMYIGSVKPNVGHSEGASGLTSLIKAVLAVENRTIPPNIKFNTPNPKIPFEAKKITVPVEATPWPWNRCVRASVNSFGMGGVNAHVIIESADNFTPPTSEVIEEHDSTPQLLLFSANTQDSLEAMIQRNLAYLRENTDSLRDLVYTMGARREHLSFRAASIVHSDMSVTTASFGKAPSSPPDIVMVFAGQGAQWPGMGVELFKSNATFRRSILEMDSVLQSLPDAPAWSIADEISKEHQTSMLYLSSYSQPICTALQVALVNTLFELNIRPYAVIGHSSGELAAAYAAGRLTASQAVTLAYYRGIVAGKVAQAGYYPFLRPGVVVACENSPSSVTISGDIDQVQYVMQEISLAHPEILCRQIKSDTAYHSHHMKSVGDTYHSFINPFFRGETEVNCQPVHFFSTVTGDELSDGDHVGPKYWQQNLESRVLFQGALENIISRQRSRHLLFLDVSPHSTLAGPIRQTLEQAEVAHPYVPCLIRFKNCAESFLSTIGQLYSHRQPLDFNMLTNPDRTAKVLTDVPTYPWQHGYSNLYTTRQNNEWLFRKQPKHELLGTRVVDSTDNEPCWRNVLYLEHVTWLRDHKVSGNIVFPAAGYVMMAGEAVRQIGSTASGFIVRQMVLDTAMVLNQSNPTEIVTSLRKHRRDRWYSFTISSHNGVKWIEHCYGEVAQENLSRDINVSNWYKTLSRGGVEFGPAFQCVESQSCSVTSNTVSGRIVSKLDSVLHIVYGAIYKGFDWQVESLPVPTSIGEIMIGECVSDLDVTMWADVSRNSNILVNGEAFGSDGCLLIRIKDIVLRPLGANQACFEEDESHAGARLLWKPSMQFLNLADLIQTPVNWTKQTMLLNDFTSLCIERALCLLHAQGDWLQRQPKPSSEQSMESLVEKILATSAAPCARAMIKVLDNIVPICKGEIDALEVLMGDDTLYELYNYLNEPQQRILEIGAGTGGTTAKILPRTKYSTYTFTDISAAFFPAAKDRFQCHANVVYRTLDITKDPLDQANVLHATPNLYETLSNLLLEELCGDAKFTNFIVGVLPGWWAGESDGRADEPYISPDRWDSILKAAAPPLHSLAFMLASPSCVPESPLKRNVTLLSDVTSSEIAVRMQKQLLSRGYSVGVQSLDQSLMDGEDVIILVDTVSPFFHNLDSRKLSTFQNLLRELQRSHSGALWVTRSIQIDCRDPRYSPTLGVARTVRSEFGLDFGTCEVDTLKYTSIGLVIDVFEAFHGRRHGQNAYPEYEYAIREDTADAGQQVQLLGDDEVELQVDTAGVNFLTVLINSASDGVGLAAIQISKMIGATIYATVIGEDKVEYLTASHGIPRDHIFNSRDSSFLDGIMRVTNGRGVDLVLTSLSADFIQASCDCVANFGKLVNLSKPTAANQGQFPIDSFHPNMSYASVDIIDYIKRRPKESKRLLEEIVELYKQGHIQPITPVKTFTATDIRQCFDYMQSGQHIGQLRLSLKSQDTFIEAVCSPKTMIFQSDASYLLVGGLGGLGAEIARWMAEHGARNLIFLSRSADAESNIRLFRELESQGCSVQAIKGSVCNASDVKRAISAARIKLKGIFNMSMVLQDASLLKMSSDEWNAATGPKIQGTWNLHDASLDQDLDFFLLFSSMGGILGIPGQANYASANTFMDAFVQFRHSSHLPASVIDIGEVQGIGHVANNPEILNRLKLLECARMSQKDLFHAITIAISHSLPPQTLDYSRYENPAQFITGLRDTTGMLDSTGGKSMLLDSRLAAYVGNSAAVTAPTETKTSANKLNNFVSSAATDSAILSEPSATQFVSLEIARWVFDLLMKPVDDDSEIDLSRSLVDVGLDSLAAVEMRSWLKSSLGLDISVLEIMASPSLAAMGEHVIRELVRKFGGDNKN.

In terms of domain architecture, Ketosynthase family 3 (KS3) spans 1 to 417 (MAICGIAVRL…GVNAHVIIES (417 aa)). Catalysis depends on for beta-ketoacyl synthase activity residues Cys170, His306, and His340. Positions 513-809 (VFAGQGAQWP…HPYVPCLIRF (297 aa)) are malonyl-CoA:ACP transacylase (MAT) domain. Residues 877-1001 (HELLGTRVVD…GEVAQENLSR (125 aa)) are N-terminal hotdog fold. The segment at 877–1128 (HELLGTRVVD…DIVLRPLGAN (252 aa)) is dehydratase (DH) domain. The region spanning 877–1202 (HELLGTRVVD…LQRQPKPSSE (326 aa)) is the PKS/mFAS DH domain. The active-site Proton acceptor; for dehydratase activity is His909. The C-terminal hotdog fold stretch occupies residues 1032–1202 (SVTSNTVSGR…LQRQPKPSSE (171 aa)). Asp1093 functions as the Proton donor; for dehydratase activity in the catalytic mechanism. Positions 1256–1390 (NYLNEPQQRI…DRWDSILKAA (135 aa)) are methyltransferase (CMet) domain. The segment at 1575–1783 (GQQVQLLGDD…SGQHIGQLRL (209 aa)) is enoyl reductase (ER) domain. The ketoreductase (KR) domain stretch occupies residues 1807 to 1981 (ASYLLVGGLG…ASVIDIGEVQ (175 aa)). Residues 2102-2183 (PSATQFVSLE…AMGEHVIREL (82 aa)) enclose the Carrier domain. O-(pantetheine 4'-phosphoryl)serine is present on Ser2143.

Highly reducing polyketide synthase; part of the gene cluster that mediates the biosynthesis of viriditoxin, one of the 'classical' secondary metabolites produced by fungi and that has antibacterial activity. The first step is performed by the polyketide synthase VdtA which condenses one acetyl-CoA and 6 malonyl-CoA units to form the heptaketide monomer backbone of viriditoxin. The product of VdtA is then O-methylated on C7 by the O-methyltransferase VdtC. The O-methyl group is important for the stereoselective coupling of the monomers at the final step of viriditoxin biosynthesis. The short-chain dehydrogenase/reductase VdtF is involved in the reduction of the C3-C4 double bond. The FAD-binding monooxygenase VdtE then converts the ketone group into a methyl-ester group to yield semi-viriditoxin. Finally, the laccase VdtB is involved in dimerization of 2 semi-viriditoxin molecules to yield the final viriditoxin. The non-catalytic carboxylesterase-like protein VdtD affects the stereochemistical outcome of the coupling. The highly reducing polyketide synthase VdtX is not involved in viriditoxin synthesis, but might possibly play a role in the production of additional metabolites not identified yet. In Byssochlamys spectabilis (Paecilomyces variotii), this protein is Highly reducing polyketide synthase VdtX.